The chain runs to 212 residues: Thymidylate kinase (212 aa).

Residues 16 to 21, Arg-97, Arg-182, and Lys-192 each bind ATP; that span reads RAGKTT.

This sequence belongs to the thymidylate kinase family. Mg(2+) is required as a cofactor.

The catalysed reaction is dTMP + ATP = dTDP + ADP. The protein operates within pyrimidine metabolism; dTTP biosynthesis. In terms of biological role, catalyzes the phosphorylation of thymidine monophosphate (dTMP) to thymidine diphosphate (dTDP), the immediate precursor for the DNA building block dTTP, with ATP as the preferred phosphoryl donor in the presence of Mg(2+). The chain is Thymidylate kinase (dtymk) from Danio rerio (Zebrafish).